We begin with the raw amino-acid sequence, 293 residues long: uncharacterized protein (293 aa).

One can recognise an HTH lysR-type domain in the interval 1 to 58 (MDLRRFITLKTVVEEGSFLRASQKLCCTQSTVTFHIQQLEQEFSVQLFEKIGRRMCLT). A DNA-binding region (H-T-H motif) is located at residues 18 to 37 (FLRASQKLCCTQSTVTFHIQ).

This sequence belongs to the LysR transcriptional regulatory family.

This is an uncharacterized protein from Escherichia coli (strain K12).